The chain runs to 183 residues: Bifunctional protein PyrR (183 aa).

The short motif at 102 to 114 is the PRPP-binding element; sequence VVLVDDVLYTGRT.

This sequence belongs to the purine/pyrimidine phosphoribosyltransferase family. PyrR subfamily. As to quaternary structure, homodimer and homohexamer; in equilibrium.

It carries out the reaction UMP + diphosphate = 5-phospho-alpha-D-ribose 1-diphosphate + uracil. Regulates transcriptional attenuation of the pyrimidine nucleotide (pyr) operon by binding in a uridine-dependent manner to specific sites on pyr mRNA. This disrupts an antiterminator hairpin in the RNA and favors formation of a downstream transcription terminator, leading to a reduced expression of downstream genes. In terms of biological role, also displays a weak uracil phosphoribosyltransferase activity which is not physiologically significant. This is Bifunctional protein PyrR from Listeria welshimeri serovar 6b (strain ATCC 35897 / DSM 20650 / CCUG 15529 / CIP 8149 / NCTC 11857 / SLCC 5334 / V8).